Here is a 578-residue protein sequence, read N- to C-terminus: Tetratricopeptide repeat protein 39A (578 aa).

TPR repeat units follow at residues 280–313, 470–503, and 511–544; these read AIFL…QQHW, CLVK…EKKI, and PNAL…YKNY.

It belongs to the TTC39 family.

This Mus musculus (Mouse) protein is Tetratricopeptide repeat protein 39A (Ttc39a).